Here is a 741-residue protein sequence, read N- to C-terminus: MPISMELPVFSTLRVPLFSRLALLPTFGVPFSSLGATTRLNCTSRKARRICVMCLVRDSAPIETCERAGEDGSDEFIEVLVIGSRKESIMDSCLDSPFPSLPLRFWSISKDSSGGLVLQQRLNHQDNALKTMNPIELLQSRPRAFILVASAGYGSDQVEAINILSAVRSGGNLAVAVLLKPFSFEGRKRLEEVNELARKLQQHTNFCIDIDIEVLLQKDLVTLDEALRNANNAVSMAINAASALISGMHGNFIDVMHKDLKELEGSEVKTILESYKEAKVGFGVGHNLKTSILRAIYDCPFFRPGLKDLNAIICIVASSVPLQKKDVKTILRTFRQTMEYTGDIIVSTVHEPDLEPKVRVTTFFILSSSEVETSNKGNIFSGLVPFVLNIFTRYRSQLQKETNIGLGETPVSIKDSADSTDVKTSNQNIEEFEIDSEDLLEVSENGDDSEYPLKEGEPSRNSRLDLKDENVEDFGAIQREPIANWSMDQGYQIEQKWQADSGDTAVLSLGIVNLPVGVRPSKKLNSNLSVASQLSRKADSREESFFNPNGSTKDSSDTASTLLSEKYADFTKQRNLSARASSMLEAERDSSKRWSPILEMQYRGGLFKGRCQGGLPEGKGRLVLGDGSIYDGMWHNGKRSGLGTFYFKNGDVFQGTWREDLIHGKGWFYFHKGDRWFANFWKGKASGEGRFYSKSGEIFFGHFKDGWRHGQFLCIDLDGTRYSETWDDGVLIDRKQVDAGD.

A chloroplast-targeting transit peptide spans 1-41 (MPISMELPVFSTLRVPLFSRLALLPTFGVPFSSLGATTRLN). Disordered regions lie at residues 444–465 (ENGDDSEYPLKEGEPSRNSRLD) and 539–558 (DSREESFFNPNGSTKDSSDT). Positions 451-465 (YPLKEGEPSRNSRLD) are enriched in basic and acidic residues. Positions 546-558 (FNPNGSTKDSSDT) are enriched in polar residues. 3 MORN repeats span residues 612 to 628 (QGGLPEGKGRLVLGDGS), 630 to 652 (YDGMWHNGKRSGLGTFYFKNGDV), and 653 to 675 (FQGTWREDLIHGKGWFYFHKGDR).

Self-interacts. Interacts with FTSZ, CDP1/PARC6 (via N-terminus), MIND1 and MINE1. Part of a complex made of ARC3, ARC6, FTSZ1 and FTSZ2. Recruited to the middle of the plastid by CDP1/PARC6 where subsequent complex made of CDP1/PARC6, ARC3 and FtsZ proteins can form; this complex enhances the dynamics of Z rings during chloroplast division. Binding to FTSZ2-1 is enabled by ARC6.

The protein resides in the plastid. Its subcellular location is the chloroplast outer membrane. It is found in the chloroplast stroma. Functionally, together with MIND1 and MCD1, regulates FtsZ ring positioning in chloroplasts in an ARC6-dependent manner. Z-ring accessory protein involved in the initiation of plastid division and division site placement (might functionally replace bacterial MinC). Acts as a disassembly factor that accelerates fragmentation and depolymerization of existing FtsZ2 filaments by enhancing FTSZ2 GTPase activity, thus leading to the conversion of FTSZ2 bound GTP into GDP, a process which triggers FtsZ2 filaments destabilization. Prevents misplaced Z-ring formation at chloroplast stroma nondivision sites. May control the rate of chloroplast expansion. Seems to influence stromule (stroma-filled tubular extensions of the plastid envelope membrane) length and frequency. The sequence is that of Protein ACCUMULATION AND REPLICATION OF CHLOROPLASTS 3, chloroplastic from Arabidopsis thaliana (Mouse-ear cress).